Here is a 118-residue protein sequence, read N- to C-terminus: Down syndrome critical region protein 4 (118 aa).

Residues 1–39 (MSLIILTRDDEPRIFTPDSDAASPALHSTSPLPDPASAS) are disordered. Residues 28 to 39 (STSPLPDPASAS) are compositionally biased toward low complexity.

In terms of tissue distribution, mainly expressed in placenta.

The polypeptide is Down syndrome critical region protein 4 (DSCR4) (Homo sapiens (Human)).